Consider the following 149-residue polypeptide: Transcription antitermination protein NusB (149 aa).

Belongs to the NusB family.

Its function is as follows. Involved in transcription antitermination. Required for transcription of ribosomal RNA (rRNA) genes. Binds specifically to the boxA antiterminator sequence of the ribosomal RNA (rrn) operons. The chain is Transcription antitermination protein NusB from Acinetobacter baylyi (strain ATCC 33305 / BD413 / ADP1).